The sequence spans 182 residues: Peptidoglycan-recognition protein SB2 (182 aa).

An N-terminal signal peptide occupies residues 1–17 (MKLQLALVLCGLTLALG). The region spanning 40–165 (PVRLIIIHHT…CQTKATACPG (126 aa)) is the N-acetylmuramoyl-L-alanine amidase domain. Position 47 (His-47) interacts with Zn(2+). Cys-54 and Cys-60 form a disulfide bridge. Asn-149 is a glycosylation site (N-linked (GlcNAc...) asparagine). Zn(2+) is bound by residues His-155 and Cys-163.

Belongs to the N-acetylmuramoyl-L-alanine amidase 2 family. The cofactor is Zn(2+).

It is found in the secreted. The enzyme catalyses Hydrolyzes the link between N-acetylmuramoyl residues and L-amino acid residues in certain cell-wall glycopeptides.. N-acetylmuramyl-L-alanine amidase involved in innate immunity by degrading bacterial peptidoglycans (PGN). Probably plays a scavenger role by digesting biologically active PGN into biologically inactive fragments. Has no direct bacteriolytic activity. This chain is Peptidoglycan-recognition protein SB2 (PGRP-SB2), found in Drosophila melanogaster (Fruit fly).